Here is a 251-residue protein sequence, read N- to C-terminus: Ubiquinone/menaquinone biosynthesis C-methyltransferase UbiE (251 aa).

Residues T74, D95, N123–A124, and S140 each bind S-adenosyl-L-methionine.

The protein belongs to the class I-like SAM-binding methyltransferase superfamily. MenG/UbiE family.

It catalyses the reaction a 2-demethylmenaquinol + S-adenosyl-L-methionine = a menaquinol + S-adenosyl-L-homocysteine + H(+). The enzyme catalyses a 2-methoxy-6-(all-trans-polyprenyl)benzene-1,4-diol + S-adenosyl-L-methionine = a 5-methoxy-2-methyl-3-(all-trans-polyprenyl)benzene-1,4-diol + S-adenosyl-L-homocysteine + H(+). Its pathway is quinol/quinone metabolism; menaquinone biosynthesis; menaquinol from 1,4-dihydroxy-2-naphthoate: step 2/2. It functions in the pathway cofactor biosynthesis; ubiquinone biosynthesis. Methyltransferase required for the conversion of demethylmenaquinol (DMKH2) to menaquinol (MKH2) and the conversion of 2-polyprenyl-6-methoxy-1,4-benzoquinol (DDMQH2) to 2-polyprenyl-3-methyl-6-methoxy-1,4-benzoquinol (DMQH2). In Citrobacter koseri (strain ATCC BAA-895 / CDC 4225-83 / SGSC4696), this protein is Ubiquinone/menaquinone biosynthesis C-methyltransferase UbiE.